The sequence spans 181 residues: Oligoribonuclease (181 aa).

Residues 8 to 171 form the Exonuclease domain; that stretch reads LIWIDLEMTG…DDIRESVAEL (164 aa). Residue Tyr-129 is part of the active site.

This sequence belongs to the oligoribonuclease family.

Its subcellular location is the cytoplasm. In terms of biological role, 3'-to-5' exoribonuclease specific for small oligoribonucleotides. The polypeptide is Oligoribonuclease (Sodalis glossinidius (strain morsitans)).